The chain runs to 426 residues: MLTIKDIHALEVMDSRGNPTIQASVILSDNTKASAIVPSGASTGKREALELRDNDKTRFLGKGVLRACENVNSVIKHHLIGLEAINQAFVDERLRALDGTPNYANLGANAVLGVSMALARASAKALNLPLYRYLGGANALTLPVPMLNIINGGTHANNSIDFQEYMIMPLGFESFREALRASTEVYHTLKKLLDGKNQLTSVGDEGGFAPNFSNNVEPLEAISQAIEKAGYKLGEEIALALDVASSELVDENFNYHLKGENKILDSHELVAYYKELVAKYPIVSIEDGLSEDDWEGWAFLSKELGRQIQLVGDDLFVTNASILQKGIEKNIANAILIKPNQIGTISETLETIRLAKHHAYQCVMSHRSGESEDSFIADFAVALNAGEIKTGSTARSERIAKYNRLLEIEHELKGGIYIGKELFKHG.

Gln163 lines the (2R)-2-phosphoglycerate pocket. The active-site Proton donor is the Glu205. 3 residues coordinate Mg(2+): Asp242, Glu286, and Asp313. (2R)-2-phosphoglycerate-binding residues include Lys338, Arg367, Ser368, and Lys389. Residue Lys338 is the Proton acceptor of the active site.

This sequence belongs to the enolase family. The cofactor is Mg(2+).

The protein localises to the cytoplasm. It is found in the secreted. It localises to the cell surface. It carries out the reaction (2R)-2-phosphoglycerate = phosphoenolpyruvate + H2O. It participates in carbohydrate degradation; glycolysis; pyruvate from D-glyceraldehyde 3-phosphate: step 4/5. Functionally, catalyzes the reversible conversion of 2-phosphoglycerate (2-PG) into phosphoenolpyruvate (PEP). It is essential for the degradation of carbohydrates via glycolysis. The chain is Enolase from Helicobacter pylori (strain HPAG1).